The primary structure comprises 312 residues: Aspartate carbamoyltransferase catalytic subunit (312 aa).

R58 and T59 together coordinate carbamoyl phosphate. K86 contributes to the L-aspartate binding site. Positions 108, 136, and 139 each coordinate carbamoyl phosphate. Residues R169 and R223 each contribute to the L-aspartate site. Carbamoyl phosphate contacts are provided by G264 and P265.

Belongs to the aspartate/ornithine carbamoyltransferase superfamily. ATCase family. Heterododecamer (2C3:3R2) of six catalytic PyrB chains organized as two trimers (C3), and six regulatory PyrI chains organized as three dimers (R2).

The enzyme catalyses carbamoyl phosphate + L-aspartate = N-carbamoyl-L-aspartate + phosphate + H(+). It participates in pyrimidine metabolism; UMP biosynthesis via de novo pathway; (S)-dihydroorotate from bicarbonate: step 2/3. Its function is as follows. Catalyzes the condensation of carbamoyl phosphate and aspartate to form carbamoyl aspartate and inorganic phosphate, the committed step in the de novo pyrimidine nucleotide biosynthesis pathway. In Heliobacterium modesticaldum (strain ATCC 51547 / Ice1), this protein is Aspartate carbamoyltransferase catalytic subunit.